The chain runs to 67 residues: U-myrmeciitoxin(01)-Mg4a (67 aa).

The first 25 residues, 1–25, serve as a signal peptide directing secretion; the sequence is MGKVFFFVLMIAIIGSTFLIEEALG.

This sequence belongs to the ant myrmeciitoxin-01 family. Homodimer; disulfide-linked. In terms of processing, contains 2 intrachain disulfide bonds (one per chain) and 1 interchain disulfide bond. In terms of tissue distribution, expressed by the venom gland.

It is found in the secreted. This is U-myrmeciitoxin(01)-Mg4a from Myrmecia gulosa (Red bulldog ant).